Consider the following 49-residue polypeptide: Large ribosomal subunit protein bL33B (49 aa).

Belongs to the bacterial ribosomal protein bL33 family.

This chain is Large ribosomal subunit protein bL33B, found in Limosilactobacillus fermentum (strain NBRC 3956 / LMG 18251) (Lactobacillus fermentum).